A 146-amino-acid chain; its full sequence is Cell division protein SepF (146 aa).

It belongs to the SepF family. Homodimer. Interacts with FtsZ.

It is found in the cytoplasm. In terms of biological role, cell division protein that is part of the divisome complex and is recruited early to the Z-ring. Probably stimulates Z-ring formation, perhaps through the cross-linking of FtsZ protofilaments. Its function overlaps with FtsA. In Alkaliphilus oremlandii (strain OhILAs) (Clostridium oremlandii (strain OhILAs)), this protein is Cell division protein SepF.